The chain runs to 312 residues: Glyoxylate/hydroxypyruvate reductase A (312 aa).

Arg227 is an active-site residue. The active-site Proton donor is His275.

The protein belongs to the D-isomer specific 2-hydroxyacid dehydrogenase family. GhrA subfamily.

The protein resides in the cytoplasm. It catalyses the reaction glycolate + NADP(+) = glyoxylate + NADPH + H(+). It carries out the reaction (R)-glycerate + NAD(+) = 3-hydroxypyruvate + NADH + H(+). The enzyme catalyses (R)-glycerate + NADP(+) = 3-hydroxypyruvate + NADPH + H(+). Functionally, catalyzes the NADPH-dependent reduction of glyoxylate and hydroxypyruvate into glycolate and glycerate, respectively. The chain is Glyoxylate/hydroxypyruvate reductase A from Escherichia coli (strain SMS-3-5 / SECEC).